The following is a 1053-amino-acid chain: Carbamoyl phosphate synthase large chain (1053 aa).

Residues 1–397 are carboxyphosphate synthetic domain; the sequence is MPKRTDIKKV…SFMKAKRSID (397 aa). The ATP site is built by Arg-127, Arg-167, Gly-173, Gly-174, Glu-206, Val-208, Glu-213, Gly-239, Ile-240, His-241, Gln-282, and Glu-294. Residues 131–323 form the ATP-grasp 1 domain; it reads RDLMNEIGEP…IARVAAKIAI (193 aa). Mg(2+) contacts are provided by Gln-282, Glu-294, and Asn-296. Mn(2+) is bound by residues Gln-282, Glu-294, and Asn-296. The segment at 398–530 is oligomerization domain; it reads TDVRTHTSPS…YSTREGTSEI (133 aa). The carbamoyl phosphate synthetic domain stretch occupies residues 531–919; it reads VRDKKQKILI…YKACISADNE (389 aa). Residues 661–852 form the ATP-grasp 2 domain; that stretch reads SVLLTTLQIP…IAKIAAKVMI (192 aa). ATP-binding residues include Arg-697, Ser-736, Leu-738, Glu-743, Gly-768, Ile-769, His-770, Ser-771, Gln-811, and Glu-823. The Mg(2+) site is built by Gln-811, Glu-823, and Asn-825. The Mn(2+) site is built by Gln-811, Glu-823, and Asn-825. The 136-residue stretch at 918-1053 folds into the MGS-like domain; the sequence is NELPLKGNVF…TLEPLSHYLR (136 aa). The interval 920 to 1053 is allosteric domain; sequence LPLKGNVFVS…TLEPLSHYLR (134 aa).

This sequence belongs to the CarB family. In terms of assembly, composed of two chains; the small (or glutamine) chain promotes the hydrolysis of glutamine to ammonia, which is used by the large (or ammonia) chain to synthesize carbamoyl phosphate. Tetramer of heterodimers (alpha,beta)4. Requires Mg(2+) as cofactor. The cofactor is Mn(2+).

It carries out the reaction hydrogencarbonate + L-glutamine + 2 ATP + H2O = carbamoyl phosphate + L-glutamate + 2 ADP + phosphate + 2 H(+). It catalyses the reaction hydrogencarbonate + NH4(+) + 2 ATP = carbamoyl phosphate + 2 ADP + phosphate + 2 H(+). It participates in amino-acid biosynthesis; L-arginine biosynthesis; carbamoyl phosphate from bicarbonate: step 1/1. The protein operates within pyrimidine metabolism; UMP biosynthesis via de novo pathway; (S)-dihydroorotate from bicarbonate: step 1/3. Large subunit of the glutamine-dependent carbamoyl phosphate synthetase (CPSase). CPSase catalyzes the formation of carbamoyl phosphate from the ammonia moiety of glutamine, carbonate, and phosphate donated by ATP, constituting the first step of 2 biosynthetic pathways, one leading to arginine and/or urea and the other to pyrimidine nucleotides. The large subunit (synthetase) binds the substrates ammonia (free or transferred from glutamine from the small subunit), hydrogencarbonate and ATP and carries out an ATP-coupled ligase reaction, activating hydrogencarbonate by forming carboxy phosphate which reacts with ammonia to form carbamoyl phosphate. The chain is Carbamoyl phosphate synthase large chain from Methanoregula boonei (strain DSM 21154 / JCM 14090 / 6A8).